The chain runs to 545 residues: ATP synthase subunit alpha (545 aa).

173–180 (GDRQTGKT) lines the ATP pocket.

Belongs to the ATPase alpha/beta chains family. F-type ATPases have 2 components, CF(1) - the catalytic core - and CF(0) - the membrane proton channel. CF(1) has five subunits: alpha(3), beta(3), gamma(1), delta(1), epsilon(1). CF(0) has three main subunits: a(1), b(2) and c(9-12). The alpha and beta chains form an alternating ring which encloses part of the gamma chain. CF(1) is attached to CF(0) by a central stalk formed by the gamma and epsilon chains, while a peripheral stalk is formed by the delta and b chains.

The protein resides in the cell membrane. It carries out the reaction ATP + H2O + 4 H(+)(in) = ADP + phosphate + 5 H(+)(out). Functionally, produces ATP from ADP in the presence of a proton gradient across the membrane. The alpha chain is a regulatory subunit. This Clavibacter michiganensis subsp. michiganensis (strain NCPPB 382) protein is ATP synthase subunit alpha.